A 327-amino-acid chain; its full sequence is Sideroflexin-2 (327 aa).

A run of 5 helical transmembrane segments spans residues 99-119 (GMLI…VVLW), 143-163 (VTQL…AAIG), 175-195 (LFQR…NIPL), 228-248 (EVVV…PLIM), and 267-287 (FQTL…CALF).

This sequence belongs to the sideroflexin family.

The protein resides in the mitochondrion membrane. It carries out the reaction L-serine(in) = L-serine(out). Its function is as follows. Mitochondrial amino-acid transporter that mediates transport of serine into mitochondria. This Drosophila melanogaster (Fruit fly) protein is Sideroflexin-2.